We begin with the raw amino-acid sequence, 901 residues long: HTH-type transcriptional regulator MalT (901 aa).

39-46 (SPAGYGKT) contributes to the ATP binding site. In terms of domain architecture, HTH luxR-type spans 829–894 (ELIRTSPLTQ…AAVQHAQKLL (66 aa)). Residues 853–872 (NEQIAGELEVAATTIKTHIR) constitute a DNA-binding region (H-T-H motif).

It belongs to the MalT family. In terms of assembly, monomer in solution. Oligomerizes to an active state in the presence of the positive effectors ATP and maltotriose.

Its activity is regulated as follows. Activated by ATP and maltotriose, which are both required for DNA binding. Functionally, positively regulates the transcription of the maltose regulon whose gene products are responsible for uptake and catabolism of malto-oligosaccharides. Specifically binds to the promoter region of its target genes, recognizing a short DNA motif called the MalT box. The polypeptide is HTH-type transcriptional regulator MalT (Escherichia coli O139:H28 (strain E24377A / ETEC)).